A 93-amino-acid polypeptide reads, in one-letter code: MTKSELIEQLCSKKPQLSAKQVEDTVKEILEQMATTLEGGDRIEIRGFGSFSLHYREPRLGRNPKTGDKVELDGKFVPHFKPGKELRERVNYS.

It belongs to the bacterial histone-like protein family. In terms of assembly, heterodimer of an alpha and a beta chain.

In terms of biological role, this protein is one of the two subunits of integration host factor, a specific DNA-binding protein that functions in genetic recombination as well as in transcriptional and translational control. The polypeptide is Integration host factor subunit beta (Aliivibrio fischeri (strain ATCC 700601 / ES114) (Vibrio fischeri)).